A 238-amino-acid chain; its full sequence is Probable transcriptional regulatory protein VS_II1504 (238 aa).

This sequence belongs to the TACO1 family.

Its subcellular location is the cytoplasm. In Vibrio atlanticus (strain LGP32) (Vibrio splendidus (strain Mel32)), this protein is Probable transcriptional regulatory protein VS_II1504.